A 492-amino-acid polypeptide reads, in one-letter code: MSAQDNLTINEKKVLLALEELGSAAPDKLEEKSGLQVDAAMQAAFMLQEKGLASVSEKVLERYSLTKEGEEYTKTGLPERQIIDALKAPAPLEELRSRFSPKTVGIATGWLIKKGWAKVENGVMVPSGNAPAGRDEEVLAAFAGKAKTLEELAADEGTVKELLKRKLVIKHEEKSRTVSVTGAGSALAAEGIVLEEEIAQLTPELLKSGAWKGKKFRPYRLDIAPNPLYGVKIHPYRRLIEQMRQIFLEMGFTEIKGGIIQSSFWNFDALFQPQDHPARDMQDTFHLGSICQLPAEYSDKVAAMHESGGDIDSCGWGGIWDRELARRNVLRTHTTSVTIKYLADNPEPPVKAFCIDRAYRRETIDPTHTPEFEQLEGVVMDKDMSFADLLGLLAEFYHRMGFEEVRFRPGYFPYTEPSVEPEVYVDGLGWVELGGAGVFRKEVTEPFGIKEPVLAWGLGVSRLAMLKLGLKDLRLLYQSDIDWLRKSEVCRI.

L-phenylalanine contacts are provided by residues Thr-335, 374–376, and Tyr-414; that span reads QLE. Glu-416 contacts Mg(2+). Phe-439 lines the L-phenylalanine pocket.

It belongs to the class-II aminoacyl-tRNA synthetase family. Phe-tRNA synthetase alpha subunit type 2 subfamily. As to quaternary structure, tetramer of two alpha and two beta subunits. Requires Mg(2+) as cofactor.

It is found in the cytoplasm. The catalysed reaction is tRNA(Phe) + L-phenylalanine + ATP = L-phenylalanyl-tRNA(Phe) + AMP + diphosphate + H(+). This chain is Phenylalanine--tRNA ligase alpha subunit, found in Methanosarcina acetivorans (strain ATCC 35395 / DSM 2834 / JCM 12185 / C2A).